The following is a 39-amino-acid chain: NEDANVIKSYSDVGVDQFKYGLELDNSIKADQEGHLEGD.

In terms of domain architecture, Chitin-binding type R&amp;R spans 15 to 39; it reads VDQFKYGLELDNSIKADQEGHLEGD.

Functionally, component of the cuticle of the larva of flesh fly. The chain is Larval cuticle protein SC6 from Sarcophaga bullata (Grey flesh fly).